The chain runs to 244 residues: Small ribosomal subunit protein uS3 (244 aa).

The KH type-2 domain maps to 39–107 (VREMLRKKLA…PAHINVTEVR (69 aa)). A disordered region spans residues 213–244 (VGQEKQDDSPRNDRNDRGDRGDRPSRPAREAR). Residues 216 to 244 (EKQDDSPRNDRNDRGDRGDRPSRPAREAR) are compositionally biased toward basic and acidic residues.

This sequence belongs to the universal ribosomal protein uS3 family. As to quaternary structure, part of the 30S ribosomal subunit. Forms a tight complex with proteins S10 and S14.

Its function is as follows. Binds the lower part of the 30S subunit head. Binds mRNA in the 70S ribosome, positioning it for translation. The protein is Small ribosomal subunit protein uS3 of Xanthomonas euvesicatoria pv. vesicatoria (strain 85-10) (Xanthomonas campestris pv. vesicatoria).